The sequence spans 902 residues: Protein translocase subunit SecA (902 aa).

ATP-binding positions include Gln87, 105 to 109, and Asp512; that span reads GEGKT. 2 disordered regions span residues 565–584 and 840–902; these read RRID…PGSS and VEEQ…GKLK. Basic and acidic residues-rich tracts occupy residues 840–859 and 873–882; these read VEEQ…HEDA and QVREGAKVGR. Zn(2+) is bound by residues Cys886, Cys888, Cys897, and His898. Over residues 892–902 the composition is skewed to basic residues; sequence KKYKQCHGKLK.

The protein belongs to the SecA family. In terms of assembly, monomer and homodimer. Part of the essential Sec protein translocation apparatus which comprises SecA, SecYEG and auxiliary proteins SecDF-YajC and YidC. Requires Zn(2+) as cofactor.

It localises to the cell inner membrane. The protein resides in the cytoplasm. It carries out the reaction ATP + H2O + cellular proteinSide 1 = ADP + phosphate + cellular proteinSide 2.. Part of the Sec protein translocase complex. Interacts with the SecYEG preprotein conducting channel. Has a central role in coupling the hydrolysis of ATP to the transfer of proteins into and across the cell membrane, serving both as a receptor for the preprotein-SecB complex and as an ATP-driven molecular motor driving the stepwise translocation of polypeptide chains across the membrane. The polypeptide is Protein translocase subunit SecA (Alteromonas mediterranea (strain DSM 17117 / CIP 110805 / LMG 28347 / Deep ecotype)).